The chain runs to 427 residues: Stemphyloxin II biosynthesis cluster transcription factor sthR (427 aa).

Residues 15 to 45 (CDRCRKQKLRCPPDKDDMGTCGRCLRAGVAC) constitute a DNA-binding region (zn(2)-C6 fungal-type). A disordered region spans residues 51 to 70 (KPRGRSQKHGISTDGTSHVS). A compositionally biased stretch (polar residues) spans 59–69 (HGISTDGTSHV).

The protein localises to the nucleus. Functionally, transcription factor that regulates the expression of the gene cluster that mediates the biosynthesis of the phytotoxin stemphyloxin II. In Phaeosphaeria nodorum (strain SN15 / ATCC MYA-4574 / FGSC 10173) (Glume blotch fungus), this protein is Stemphyloxin II biosynthesis cluster transcription factor sthR.